Consider the following 366-residue polypeptide: tRNA/tmRNA (uracil-C(5))-methyltransferase (366 aa).

Residues glutamine 190, tyrosine 218, asparagine 223, glutamate 239, and aspartate 299 each contribute to the S-adenosyl-L-methionine site. Cysteine 324 (nucleophile) is an active-site residue. Residue glutamate 358 is the Proton acceptor of the active site.

This sequence belongs to the class I-like SAM-binding methyltransferase superfamily. RNA M5U methyltransferase family. TrmA subfamily.

It catalyses the reaction uridine(54) in tRNA + S-adenosyl-L-methionine = 5-methyluridine(54) in tRNA + S-adenosyl-L-homocysteine + H(+). The enzyme catalyses uridine(341) in tmRNA + S-adenosyl-L-methionine = 5-methyluridine(341) in tmRNA + S-adenosyl-L-homocysteine + H(+). Dual-specificity methyltransferase that catalyzes the formation of 5-methyluridine at position 54 (m5U54) in all tRNAs, and that of position 341 (m5U341) in tmRNA (transfer-mRNA). The sequence is that of tRNA/tmRNA (uracil-C(5))-methyltransferase from Enterobacter sp. (strain 638).